An 86-amino-acid chain; its full sequence is Small ribosomal subunit protein uS17 (86 aa).

It belongs to the universal ribosomal protein uS17 family. In terms of assembly, part of the 30S ribosomal subunit.

One of the primary rRNA binding proteins, it binds specifically to the 5'-end of 16S ribosomal RNA. This Helicobacter pylori (strain P12) protein is Small ribosomal subunit protein uS17.